The primary structure comprises 362 residues: Phosphoserine aminotransferase (362 aa).

L-glutamate contacts are provided by Ser-9 and Arg-42. Pyridoxal 5'-phosphate is bound by residues 76 to 77 (GR), Trp-102, Thr-153, Asp-174, and Gln-197. The residue at position 198 (Lys-198) is an N6-(pyridoxal phosphate)lysine. 239–240 (NT) serves as a coordination point for pyridoxal 5'-phosphate.

It belongs to the class-V pyridoxal-phosphate-dependent aminotransferase family. SerC subfamily. As to quaternary structure, homodimer. The cofactor is pyridoxal 5'-phosphate.

Its subcellular location is the cytoplasm. It catalyses the reaction O-phospho-L-serine + 2-oxoglutarate = 3-phosphooxypyruvate + L-glutamate. The catalysed reaction is 4-(phosphooxy)-L-threonine + 2-oxoglutarate = (R)-3-hydroxy-2-oxo-4-phosphooxybutanoate + L-glutamate. The protein operates within amino-acid biosynthesis; L-serine biosynthesis; L-serine from 3-phospho-D-glycerate: step 2/3. It functions in the pathway cofactor biosynthesis; pyridoxine 5'-phosphate biosynthesis; pyridoxine 5'-phosphate from D-erythrose 4-phosphate: step 3/5. Its function is as follows. Catalyzes the reversible conversion of 3-phosphohydroxypyruvate to phosphoserine and of 3-hydroxy-2-oxo-4-phosphonooxybutanoate to phosphohydroxythreonine. This chain is Phosphoserine aminotransferase, found in Citrobacter koseri (strain ATCC BAA-895 / CDC 4225-83 / SGSC4696).